A 468-amino-acid polypeptide reads, in one-letter code: MVGRMCVAVLIVLLLVATAGADPNGAETLKENPELPVDFVWALICGFLVMFMQAGFAMLEAGFSRAKNVANVMMKNLMDFAVGSLAFFAVGFALMMGADWQGIAGTTGWFLAGESYDVSTIELWFFMLVFAATAATIVSGSIAERPKFSVYLVYSAVVSAVIYPIYGHWLWGGGWLSSSEFMVKLGGGYGALDFAGSGVVHALGGYIALAAVMLLGPRLGKYDSDGNPRAIPGHNLAFAVIGTFILWFGWFGFNAGSTLSAHELRVSIIASNTNLAAAAGAVTAMAITWLRNGKPDVGMTCNGAVAGLVAITAPCAWVQPWSSVVIGTIAGFIATYGYWWLEKRGLDDVVGAIPVHGFSGTWGLIALGIFADGSYGLYATESPLVTGLLYGNWGFFIVQLISAIVNFAWAFGTGFALFWILKKVIGIRVSPEEEMLGLDIAEHAAVAYPNFVCTETELPLAMKQGGGR.

Transmembrane regions (helical) follow at residues 1-21, 39-59, 77-97, 123-143, 156-176, 194-214, 236-256, 268-288, 297-317, 321-341, 350-370, and 400-420; these read MVGR…TAGA, FVWA…FAML, LMDF…LMMG, LWFF…GSIA, AVVS…GGWL, FAGS…AVML, LAFA…FNAG, IIAS…MAIT, VGMT…PCAW, WSSV…YWWL, VGAI…LGIF, and LISA…LFWI.

It belongs to the ammonia transporter channel (TC 1.A.11.2) family. As to quaternary structure, homotrimer.

The protein resides in the cell membrane. Involved in the uptake of ammonium/ammonia (NH(4)(+)/NH(3)). Transport is electrogenic. The polypeptide is Ammonium transporter Amt2 (Archaeoglobus fulgidus (strain ATCC 49558 / DSM 4304 / JCM 9628 / NBRC 100126 / VC-16)).